Here is a 273-residue protein sequence, read N- to C-terminus: 3-methyl-2-oxobutanoate hydroxymethyltransferase (273 aa).

Positions 49 and 88 each coordinate Mg(2+). 3-methyl-2-oxobutanoate contacts are provided by residues 49-50 (DS), Asp88, and Lys118. Mg(2+) is bound at residue Glu120. Glu187 acts as the Proton acceptor in catalysis.

It belongs to the PanB family. As to quaternary structure, homodecamer; pentamer of dimers. Requires Mg(2+) as cofactor.

It localises to the cytoplasm. The catalysed reaction is 3-methyl-2-oxobutanoate + (6R)-5,10-methylene-5,6,7,8-tetrahydrofolate + H2O = 2-dehydropantoate + (6S)-5,6,7,8-tetrahydrofolate. Its pathway is cofactor biosynthesis; (R)-pantothenate biosynthesis; (R)-pantoate from 3-methyl-2-oxobutanoate: step 1/2. Catalyzes the reversible reaction in which hydroxymethyl group from 5,10-methylenetetrahydrofolate is transferred onto alpha-ketoisovalerate to form ketopantoate. The protein is 3-methyl-2-oxobutanoate hydroxymethyltransferase of Sinorhizobium medicae (strain WSM419) (Ensifer medicae).